The following is a 341-amino-acid chain: Tetraacyldisaccharide 4'-kinase (341 aa).

54 to 61 (TVGGTGKT) provides a ligand contact to ATP.

Belongs to the LpxK family.

The enzyme catalyses a lipid A disaccharide + ATP = a lipid IVA + ADP + H(+). The protein operates within glycolipid biosynthesis; lipid IV(A) biosynthesis; lipid IV(A) from (3R)-3-hydroxytetradecanoyl-[acyl-carrier-protein] and UDP-N-acetyl-alpha-D-glucosamine: step 6/6. Its function is as follows. Transfers the gamma-phosphate of ATP to the 4'-position of a tetraacyldisaccharide 1-phosphate intermediate (termed DS-1-P) to form tetraacyldisaccharide 1,4'-bis-phosphate (lipid IVA). This chain is Tetraacyldisaccharide 4'-kinase, found in Mesorhizobium japonicum (strain LMG 29417 / CECT 9101 / MAFF 303099) (Mesorhizobium loti (strain MAFF 303099)).